A 313-amino-acid polypeptide reads, in one-letter code: Ribosomal protein L11 methyltransferase (313 aa).

T163, G184, D206, and N249 together coordinate S-adenosyl-L-methionine.

It belongs to the methyltransferase superfamily. PrmA family.

It localises to the cytoplasm. The catalysed reaction is L-lysyl-[protein] + 3 S-adenosyl-L-methionine = N(6),N(6),N(6)-trimethyl-L-lysyl-[protein] + 3 S-adenosyl-L-homocysteine + 3 H(+). In terms of biological role, methylates ribosomal protein L11. The polypeptide is Ribosomal protein L11 methyltransferase (Brevibacillus brevis (strain 47 / JCM 6285 / NBRC 100599)).